The sequence spans 533 residues: Chromosomal replication initiator protein DnaA (533 aa).

The segment at 1–72 (MNDFWQHCSA…DLARDFWNAP (72 aa)) is domain I, interacts with DnaA modulators. A domain II region spans residues 72 to 196 (PIEVQFVLDP…EAADSMYERS (125 aa)). Residues 83–120 (AGQRSPAGATPLAPRAPLPSANPAPVAPGPASAPAVDA) are disordered. The segment covering 96-110 (PRAPLPSANPAPVAP) has biased composition (pro residues). Residues 111–120 (GPASAPAVDA) are compositionally biased toward low complexity. Residues 197-413 (KLNPVLTFDN…GALRKILAYS (217 aa)) are domain III, AAA+ region. ATP is bound by residues Gly-241, Gly-243, Lys-244, and Thr-245. The domain IV, binds dsDNA stretch occupies residues 414 to 533 (KFHGREITIE…LHVLEQTLKG (120 aa)).

Belongs to the DnaA family. As to quaternary structure, oligomerizes as a right-handed, spiral filament on DNA at oriC.

Its subcellular location is the cytoplasm. Its function is as follows. Plays an essential role in the initiation and regulation of chromosomal replication. ATP-DnaA binds to the origin of replication (oriC) to initiate formation of the DNA replication initiation complex once per cell cycle. Binds the DnaA box (a 9 base pair repeat at the origin) and separates the double-stranded (ds)DNA. Forms a right-handed helical filament on oriC DNA; dsDNA binds to the exterior of the filament while single-stranded (ss)DNA is stabiized in the filament's interior. The ATP-DnaA-oriC complex binds and stabilizes one strand of the AT-rich DNA unwinding element (DUE), permitting loading of DNA polymerase. After initiation quickly degrades to an ADP-DnaA complex that is not apt for DNA replication. Binds acidic phospholipids. The sequence is that of Chromosomal replication initiator protein DnaA from Burkholderia pseudomallei (strain 1710b).